Consider the following 522-residue polypeptide: Maturase K (522 aa).

Belongs to the intron maturase 2 family. MatK subfamily.

The protein localises to the plastid. The protein resides in the chloroplast. Usually encoded in the trnK tRNA gene intron. Probably assists in splicing its own and other chloroplast group II introns. In Iris tenax (Oregon iris), this protein is Maturase K.